Here is a 445-residue protein sequence, read N- to C-terminus: SVP1-like protein 2 (445 aa).

2 WD repeats span residues 218–258 and 263–302; these read AHKA…LLKE and LDRAEIYDMCFSPLGTRLAVVSDKQTLHVFQIAPMAEGTL. A disordered region spans residues 301–321; sequence TLNPANPEDHQSSGSNGHIKA. Polar residues predominate over residues 312–321; sequence SSGSNGHIKA.

The protein belongs to the WD repeat PROPPIN family.

Its subcellular location is the vacuole membrane. It is found in the cytoplasmic vesicle membrane. Its function is as follows. Involved in mitochondrial or peroxisomal functions and amino acid signaling pathways. The sequence is that of SVP1-like protein 2 (HSV2) from Candida glabrata (strain ATCC 2001 / BCRC 20586 / JCM 3761 / NBRC 0622 / NRRL Y-65 / CBS 138) (Yeast).